A 461-amino-acid polypeptide reads, in one-letter code: tRNA modification GTPase MnmE (461 aa).

The (6S)-5-formyl-5,6,7,8-tetrahydrofolate site is built by Lys-32, Glu-89, and Lys-128. In terms of domain architecture, TrmE-type G spans 224-387; that stretch reads GHALSIVGKP…LGQKISAFFP (164 aa). Asn-234 is a K(+) binding site. GTP-binding positions include 234-239, 253-259, and 278-281; these read NAGKSS, SDIKGTT, and DTAG. Mg(2+) is bound at residue Ser-238. K(+) contacts are provided by Ser-253, Ile-255, and Thr-258. Thr-259 contributes to the Mg(2+) binding site. Lys-461 is a binding site for (6S)-5-formyl-5,6,7,8-tetrahydrofolate.

This sequence belongs to the TRAFAC class TrmE-Era-EngA-EngB-Septin-like GTPase superfamily. TrmE GTPase family. Homodimer. Heterotetramer of two MnmE and two MnmG subunits. It depends on K(+) as a cofactor.

It localises to the cytoplasm. In terms of biological role, exhibits a very high intrinsic GTPase hydrolysis rate. Involved in the addition of a carboxymethylaminomethyl (cmnm) group at the wobble position (U34) of certain tRNAs, forming tRNA-cmnm(5)s(2)U34. This is tRNA modification GTPase MnmE from Helicobacter pylori (strain HPAG1).